A 255-amino-acid polypeptide reads, in one-letter code: Accessory gland-specific peptide 26Aa (255 aa).

Positions 1–18 are cleaved as a signal peptide; sequence MNLILLCSQILLLLFTVA. Residues 86 to 110 form a disordered region; sequence PINNSKSRKNSSTLPSQILTDKPNQ. The segment covering 87–110 has biased composition (polar residues); sequence INNSKSRKNSSTLPSQILTDKPNQ. N-linked (GlcNAc...) asparagine glycosylation is found at Asn88, Asn95, and Asn136. Disordered regions lie at residues 177-196 and 235-255; these read NAQN…SKDI and NNPA…PSTT. Residues 183–192 are compositionally biased toward basic residues; sequence KSTKSCKKRP. Residues 245–255 show a composition bias toward polar residues; it reads KSPSEGNPSTT.

In terms of processing, it undergoes several cleavages as it is secreted and it is further processed in the recipient female. In terms of tissue distribution, main cells of the accessory glands of males.

It localises to the secreted. The protein resides in the extracellular space. This protein is transferred from male to female's hemolymph during mating, affecting egglaying and behavior after mating. This is Accessory gland-specific peptide 26Aa (Acp26Aa) from Drosophila sechellia (Fruit fly).